A 336-amino-acid chain; its full sequence is PDGSGRSSNRRDRPRQLSPSQSSDSQVHSGVQVEGRRGHSSSANRRAGSSSGSGVQGASAGGLAADASRRSGARQGQASAQGRAGSQGQAQGRVSSSADRQGRRGVSESRASDSEGHSDFSEGQAVGAHRQSGAGQRHEQRSSRGQHGSGYYYEQEHSEEESDSQHQHGHQHEQQRGHQHQHQHQHEHEQPESGHRQQQSSGRGHQGAHQEQGRDSARPRGSNQGHSSSRHQADSPRVSARSGSGGRGQSPDASGRSSNRRDRPRQPSPSQSSDSQVHSGVQVEAQRGQSSSANRRAGSSSGSGVQGAAASGQGGYESIFTAKHLDFNQSHSYYYY.

Residues 1–313 (PDGSGRSSNR…GVQGAAASGQ (313 aa)) are disordered. Composition is skewed to low complexity over residues 16-26 (QLSPSQSSDSQ), 40-66 (SSSA…LAAD), and 73-98 (ARQG…SSSA). Basic and acidic residues-rich tracts occupy residues 100-120 (RQGR…HSDF), 163-176 (DSQH…EQQR), and 184-195 (HQHEHEQPESGH). Over residues 285-311 (AQRGQSSSANRRAGSSSGSGVQGAAAS) the composition is skewed to low complexity.

The protein belongs to the S100-fused protein family. In terms of processing, filaggrin is initially synthesized as a large, insoluble, highly phosphorylated precursor containing many tandem copies of 248 AA, which are not separated by large linker sequences. During terminal differentiation it is dephosphorylated and proteolytically cleaved. As to expression, expressed in the granular layer of the epidermis (at protein level). Expressed in the epidermis of the ear (at protein level).

The protein localises to the cytoplasmic granule. Functionally, aggregates keratin intermediate filaments and promotes disulfide-bond formation among the intermediate filaments during terminal differentiation of mammalian epidermis. The protein is Filaggrin (Flg) of Mus musculus (Mouse).